We begin with the raw amino-acid sequence, 686 residues long: MFGFIHESIRQLVIRKYGEDVWLQVLERSGFENGKENIVNHYYSDTDTYVLVDSVSIVLKVTKDQIWEMYGGFLITYSMEIGWDELVRSMSPNLKGFLDNLDSLHYFIDHVVYKANLRGPSFRCEENPDGTLMLHYFTGRPGLYHIVKGVVKEVAKLVFNLDISLVVQGRTQRSVHMNNGERVEEHVIFLIKNVEEPRRDSDTSTTSALTSVEPDFGEIIDDNLKVSLQDFSRALPYHFVLDESCRLVQCGDELYNHIPNELLQPGTPILRIFEINRPQIPLDFENICNFINAVFVLQVKTSPLRKKHMNAMTKEEREQEVEAMEEEVESNELTQGCHLKLKGQMMMLSTKKHIIYLCSPYVTSINELMQFGMRLTAMPLHDATRDLILLNQQRLSDVEVNLQLEANNEQLETMTHELEVERQKTDSILKDMLPRKIAKQLLSGEHLEPCEYEATVMFCDLPAFQQIIPVCQPKNIVKLLNEVFFKLDRIVVLRGVYKVETVSDSYMTVSGIPDYTSEHAENMCHVALGMMWEARSVMDPVNKTPFLLRIGLHSGTIIAGVVGTKMPRYCLFGETVTLASQMESLGVAGKIQCSSWTYSKAMETGRFEFSPRGRINVKGRGDVETYFLMRSLKKSIWEITDHERDVNVNSIEGYEELEIFIENAQTVKHDGHPKANQNHSATCTIA.

Residue His-105 participates in heme binding. Coiled coils occupy residues 306–335 and 398–432; these read KKHM…ELTQ and VEVN…LKDM. Residues 455–583 form the Guanylate cyclase domain; it reads TVMFCDLPAF…ETVTLASQME (129 aa). Residues Asp-460 and Asp-504 each contribute to the Mg(2+) site.

It belongs to the adenylyl cyclase class-4/guanylyl cyclase family. In terms of assembly, heterodimer; with other soluble guanylate cyclases. Requires heme as cofactor. In terms of tissue distribution, expressed in a small number of neurons, corresponding to URX, AQR and PQR neurons.

It localises to the cytoplasm. The enzyme catalyses GTP = 3',5'-cyclic GMP + diphosphate. May be regulated by molecular oxygen. Probably not activated by nitric oxide (NO). Its function is as follows. Synthesizes cyclic GMP (cGMP) from GTP. May be involved in sensitivity to quinine by regulating egl-4 activity through the production of cGMP. In Caenorhabditis elegans, this protein is Soluble guanylate cyclase gcy-34 (gcy-34).